The following is a 262-amino-acid chain: Acyl-[acyl-carrier-protein]--UDP-N-acetylglucosamine O-acyltransferase (262 aa).

Belongs to the transferase hexapeptide repeat family. LpxA subfamily. Homotrimer.

The protein localises to the cytoplasm. The enzyme catalyses a (3R)-hydroxyacyl-[ACP] + UDP-N-acetyl-alpha-D-glucosamine = a UDP-3-O-[(3R)-3-hydroxyacyl]-N-acetyl-alpha-D-glucosamine + holo-[ACP]. It participates in glycolipid biosynthesis; lipid IV(A) biosynthesis; lipid IV(A) from (3R)-3-hydroxytetradecanoyl-[acyl-carrier-protein] and UDP-N-acetyl-alpha-D-glucosamine: step 1/6. Involved in the biosynthesis of lipid A, a phosphorylated glycolipid that anchors the lipopolysaccharide to the outer membrane of the cell. The protein is Acyl-[acyl-carrier-protein]--UDP-N-acetylglucosamine O-acyltransferase of Shigella boydii serotype 18 (strain CDC 3083-94 / BS512).